A 314-amino-acid chain; its full sequence is Methionyl-tRNA formyltransferase (314 aa).

110–113 (SLLP) provides a ligand contact to (6S)-5,6,7,8-tetrahydrofolate.

The protein belongs to the Fmt family.

It carries out the reaction L-methionyl-tRNA(fMet) + (6R)-10-formyltetrahydrofolate = N-formyl-L-methionyl-tRNA(fMet) + (6S)-5,6,7,8-tetrahydrofolate + H(+). Functionally, attaches a formyl group to the free amino group of methionyl-tRNA(fMet). The formyl group appears to play a dual role in the initiator identity of N-formylmethionyl-tRNA by promoting its recognition by IF2 and preventing the misappropriation of this tRNA by the elongation apparatus. In Lactobacillus gasseri (strain ATCC 33323 / DSM 20243 / BCRC 14619 / CIP 102991 / JCM 1131 / KCTC 3163 / NCIMB 11718 / NCTC 13722 / AM63), this protein is Methionyl-tRNA formyltransferase.